We begin with the raw amino-acid sequence, 873 residues long: Zinc fingers and homeoboxes protein 1 (873 aa).

The segment at 24 to 63 (LISDLDEGPPVLTPVENTRAESISSDEEVHESVDSDNQQN) is disordered. At threonine 36 the chain carries Phosphothreonine. A phosphoserine mark is found at serine 45, serine 47, and serine 48. C2H2-type zinc fingers lie at residues 70-93 (YECK…DSEH) and 102-125 (YVCV…LKYH). A Glycyl lysine isopeptide (Lys-Gly) (interchain with G-Cter in SUMO2) cross-link involves residue lysine 159. Positions 200 to 236 (HNSVEDVPEEKENEIKPDREEIVENPSSSASESNTST) are disordered. Serine 202 bears the Phosphoserine mark. Positions 212-221 (NEIKPDREEI) are enriched in basic and acidic residues. Low complexity predominate over residues 223-236 (ENPSSSASESNTST). Residues 272–432 (NSNLIPKVLI…QNNIQKSQVP (161 aa)) form a required for dimerization region. Positions 272–564 (NSNLIPKVLI…AQPKQSWNPF (293 aa)) are required for interaction with NFYA. A DNA-binding region (homeobox 1) is located at residues 284–346 (NSIPTYNAAL…LKHGVSWTPE (63 aa)). Residues lysine 441, lysine 454, lysine 485, and lysine 629 each participate in a glycyl lysine isopeptide (Lys-Gly) (interchain with G-Cter in SUMO2) cross-link. DNA-binding regions (homeobox) lie at residues 464–526 (SFGI…KSNQ) and 569–630 (PQKF…EEKM). Disordered stretches follow at residues 626 to 667 (KEEK…ICKK) and 732 to 769 (SSMN…INNW). Phosphoserine is present on serine 648. Positions 660–722 (STGKICKKTP…YAWKNGNLKW (63 aa)) form a DNA-binding region, homeobox 4. The segment at 734-768 (MNGLSSLRKRGRGRPKGRGRGRPRGRPRGSKRINN) is required for nuclear localization. Residues 740-764 (LRKRGRGRPKGRGRGRPRGRPRGSK) show a composition bias toward basic residues. Position 774 is a phosphoserine (serine 774). Positions 777 to 832 (KFKTGTAILKDYYLKHKFLNEQDLDELVNKSHMGYEQVREWFAERQRRSELGIELF) form a DNA-binding region, homeobox 5. The tract at residues 829–873 (IELFEENEEEDEVIDDQEEDEEETDDSDTWEPPRHVKRKLSKSDD) is disordered. Over residues 831-857 (LFEENEEEDEVIDDQEEDEEETDDSDT) the composition is skewed to acidic residues. The interval 831–873 (LFEENEEEDEVIDDQEEDEEETDDSDTWEPPRHVKRKLSKSDD) is required for repressor activity. Residues 863-873 (HVKRKLSKSDD) are compositionally biased toward basic residues.

Belongs to the ZHX family. In terms of assembly, forms homodimers. Heterodimer (via HD1 domain) with ZHX2 (via HD1 domain). Also forms a heterodimer with ZHX3 which is a prerequisite for repressor activity. Interacts with ATF7IP and NFYA. Interacts (via homeobox domains) with DNMT3B (via PWWP domain).

The protein resides in the nucleus. In terms of biological role, acts as a transcriptional repressor. Increases DNMT3B-mediated repressive transcriptional activity when DNMT3B is tethered to DNA. May link molecule between DNMT3B and other co-repressor proteins. In Pan troglodytes (Chimpanzee), this protein is Zinc fingers and homeoboxes protein 1 (ZHX1).